The primary structure comprises 424 residues: 3-phosphoshikimate 1-carboxyvinyltransferase (424 aa).

3-phosphoshikimate contacts are provided by lysine 21, serine 22, and arginine 26. Lysine 21 serves as a coordination point for phosphoenolpyruvate. Phosphoenolpyruvate is bound by residues glycine 91 and arginine 119. Positions 164, 166, 310, and 337 each coordinate 3-phosphoshikimate. Glutamine 166 serves as a coordination point for phosphoenolpyruvate. Residue aspartate 310 is the Proton acceptor of the active site. Phosphoenolpyruvate contacts are provided by arginine 341 and arginine 382.

It belongs to the EPSP synthase family. In terms of assembly, monomer.

The protein resides in the cytoplasm. The enzyme catalyses 3-phosphoshikimate + phosphoenolpyruvate = 5-O-(1-carboxyvinyl)-3-phosphoshikimate + phosphate. It participates in metabolic intermediate biosynthesis; chorismate biosynthesis; chorismate from D-erythrose 4-phosphate and phosphoenolpyruvate: step 6/7. Catalyzes the transfer of the enolpyruvyl moiety of phosphoenolpyruvate (PEP) to the 5-hydroxyl of shikimate-3-phosphate (S3P) to produce enolpyruvyl shikimate-3-phosphate and inorganic phosphate. The sequence is that of 3-phosphoshikimate 1-carboxyvinyltransferase from Campylobacter curvus (strain 525.92).